The following is a 540-amino-acid chain: T-complex protein 1 subunit delta (540 aa).

The span at 1 to 12 (MPPAVPAAAATA) shows a compositional bias: low complexity. The disordered stretch occupies residues 1–32 (MPPAVPAAAATARQSASGRERNFKDKDKPESV). The segment covering 18 to 31 (GRERNFKDKDKPES) has biased composition (basic and acidic residues).

This sequence belongs to the TCP-1 chaperonin family. As to quaternary structure, heterooligomeric complex of about 850 to 900 kDa that forms two stacked rings, 12 to 16 nm in diameter.

Its subcellular location is the cytoplasm. In terms of biological role, molecular chaperone; assists the folding of proteins upon ATP hydrolysis. Known to play a role, in vitro, in the folding of actin and tubulin. This is T-complex protein 1 subunit delta (cct-4) from Caenorhabditis elegans.